The sequence spans 274 residues: 2-dehydro-3-deoxyphosphooctonate aldolase (274 aa).

Belongs to the KdsA family.

The protein localises to the cytoplasm. The enzyme catalyses D-arabinose 5-phosphate + phosphoenolpyruvate + H2O = 3-deoxy-alpha-D-manno-2-octulosonate-8-phosphate + phosphate. It functions in the pathway carbohydrate biosynthesis; 3-deoxy-D-manno-octulosonate biosynthesis; 3-deoxy-D-manno-octulosonate from D-ribulose 5-phosphate: step 2/3. Its pathway is bacterial outer membrane biogenesis; lipopolysaccharide biosynthesis. In Rickettsia typhi (strain ATCC VR-144 / Wilmington), this protein is 2-dehydro-3-deoxyphosphooctonate aldolase.